The sequence spans 219 residues: Transcriptional regulatory protein QseB (219 aa).

Residues 2–116 enclose the Response regulatory domain; that stretch reads RILLVEDDTL…EVAARLEALV (115 aa). The residue at position 51 (Asp51) is a 4-aspartylphosphate. The ompR/PhoB-type DNA-binding region spans 124-218; sequence SSELRHGQVT…VHGIGYTLGD (95 aa).

Phosphorylated by QseC.

The protein resides in the cytoplasm. Its function is as follows. Member of a two-component regulatory system QseB/QseC. Activates the flagella regulon by activating transcription of flhDC. The sequence is that of Transcriptional regulatory protein QseB (qseB) from Salmonella typhimurium (strain LT2 / SGSC1412 / ATCC 700720).